The sequence spans 128 residues: S-protein homolog 5 (128 aa).

Positions 1–20 (MEKVSIVCFFFFLLFGSGYG) are cleaved as a signal peptide.

This sequence belongs to the plant self-incompatibility (S1) protein family.

The protein resides in the secreted. The protein is S-protein homolog 5 of Arabidopsis thaliana (Mouse-ear cress).